The primary structure comprises 171 residues: Putative ankyrin repeat protein PA3287 (171 aa).

3 ANK repeats span residues 48-77, 81-110, and 114-143; these read KGDSLLMLASYHGHADTVRLLLAYKADPDL, AGQTPLAGAAFKGDLAMVELLLAGGADVEG, and DGKTALMMAAMFNQAEVAASLLAHGARRDA.

The chain is Putative ankyrin repeat protein PA3287 from Pseudomonas aeruginosa (strain ATCC 15692 / DSM 22644 / CIP 104116 / JCM 14847 / LMG 12228 / 1C / PRS 101 / PAO1).